We begin with the raw amino-acid sequence, 156 residues long: Small ribosomal subunit protein uS7 (156 aa).

It belongs to the universal ribosomal protein uS7 family. As to quaternary structure, part of the 30S ribosomal subunit. Contacts proteins S9 and S11.

In terms of biological role, one of the primary rRNA binding proteins, it binds directly to 16S rRNA where it nucleates assembly of the head domain of the 30S subunit. Is located at the subunit interface close to the decoding center, probably blocks exit of the E-site tRNA. The chain is Small ribosomal subunit protein uS7 from Mesorhizobium japonicum (strain LMG 29417 / CECT 9101 / MAFF 303099) (Mesorhizobium loti (strain MAFF 303099)).